Here is a 1084-residue protein sequence, read N- to C-terminus: Ribonucleoside-diphosphate reductase NrdEB subunit alpha (1084 aa).

Substrate contacts are provided by residues Thr-152, 168 to 169 (SC), and Gly-197. A disulfide bridge connects residues Cys-169 and Cys-793. Residue Asn-379 is the Proton acceptor of the active site. Cys-381 serves as the catalytic Cysteine radical intermediate. A DOD-type homing endonuclease domain is found at 503–654 (IMGIIAGDGT…VQKLLLNMGV (152 aa)). Glu-768 acts as the Proton acceptor in catalysis. 964 to 968 (PTGSI) is a substrate binding site.

Belongs to the ribonucleoside diphosphate reductase large chain family. Tetramer of two alpha and two beta subunits. Post-translationally, this protein undergoes protein self-splicing that involves post-translational excision of the intervening region (intein) followed by peptide ligation.

The enzyme catalyses a 2'-deoxyribonucleoside 5'-diphosphate + [thioredoxin]-disulfide + H2O = a ribonucleoside 5'-diphosphate + [thioredoxin]-dithiol. With respect to regulation, under complex allosteric control mediated by deoxynucleoside triphosphates and ATP binding. The type of nucleotide bound at the specificity site determines substrate preference. It seems probable that ATP makes the enzyme reduce CDP and UDP, dGTP favors ADP reduction and dTTP favors GDP reduction. Functionally, provides the precursors necessary for DNA synthesis. Catalyzes the biosynthesis of deoxyribonucleotides from the corresponding ribonucleotides. In Bacillus subtilis (strain 168), this protein is Ribonucleoside-diphosphate reductase NrdEB subunit alpha (nrdEB).